The sequence spans 294 residues: GTPase Era (294 aa).

Residues 2–171 (NSGVVTIIGR…LSLLIELLPE (170 aa)) form the Era-type G domain. Residues 10 to 17 (GRPSAGKS) are G1. GTP is bound at residue 10–17 (GRPSAGKS). The interval 36 to 40 (QTTRN) is G2. Positions 57 to 60 (DTPG) are G3. Residues 57–61 (DTPGY) and 119–122 (NKAD) each bind GTP. A G4 region spans residues 119–122 (NKAD). A G5 region spans residues 150–152 (ISA). A KH type-2 domain is found at 202 to 280 (TREEIPHALY…QLDLQVRVNK (79 aa)).

This sequence belongs to the TRAFAC class TrmE-Era-EngA-EngB-Septin-like GTPase superfamily. Era GTPase family. As to quaternary structure, monomer.

It is found in the cytoplasm. The protein localises to the cell inner membrane. Its function is as follows. An essential GTPase that binds both GDP and GTP, with rapid nucleotide exchange. Plays a role in 16S rRNA processing and 30S ribosomal subunit biogenesis and possibly also in cell cycle regulation and energy metabolism. The protein is GTPase Era of Treponema denticola (strain ATCC 35405 / DSM 14222 / CIP 103919 / JCM 8153 / KCTC 15104).